The primary structure comprises 328 residues: Gonadotropin-releasing hormone receptor (328 aa).

Residues 1 to 38 (MANSASPEQNQNHCSAINNSIPLMQGNLPTLTLSGKIR) are Extracellular-facing. An N-linked (GlcNAc...) asparagine glycan is attached at Asn-18. Residues 39–58 (VTVTFFLFLLSATFNASFLL) traverse the membrane as a helical segment. Over 59-77 (KLQKWTQKKEKGKKLSRMK) the chain is Cytoplasmic. Residues 78–97 (LLLKHLTLANLLETLIVMPL) traverse the membrane as a helical segment. Over 98–115 (DGMWNITVQWYAGELLCK) the chain is Extracellular. N-linked (GlcNAc...) asparagine glycosylation is present at Asn-102. A disulfide bridge connects residues Cys-114 and Cys-196. The helical transmembrane segment at 116-137 (VLSYLKLFSMYAPAFMMVVISL) threads the bilayer. Topologically, residues 138–164 (DRSLAITRPLALKSNSKVGQSMVGLAW) are cytoplasmic. Residues 165–184 (ILSSVFAGPQLYIFRMIHLA) form a helical membrane-spanning segment. Topologically, residues 185 to 212 (DSSGQTKVFSQCVTHCSFSQWWHQAFYN) are extracellular. A helical membrane pass occupies residues 213 to 232 (FFTFSCLFIIPLFIMLICNA). At 233–281 (KIIFTLTRVLHQDPHELQLNQSKNNIPRARLKTLKMTVAFATSFTVCWT) the chain is on the cytoplasmic side. A helical transmembrane segment spans residues 282-300 (PYYVLGIWYWFDPEMLNRL). At 301 to 306 (SDPVNH) the chain is on the extracellular side. The helical transmembrane segment at 307-326 (FFFLFAFLNPCFDPLIYGYF) threads the bilayer. Topologically, residues 327-328 (SL) are cytoplasmic.

This sequence belongs to the G-protein coupled receptor 1 family. Pituitary, ovary, testis, breast and prostate but not in liver and spleen.

It is found in the cell membrane. In terms of biological role, receptor for gonadotropin releasing hormone (GnRH) that mediates the action of GnRH to stimulate the secretion of the gonadotropic hormones luteinizing hormone (LH) and follicle-stimulating hormone (FSH). This receptor mediates its action by association with G-proteins that activate a phosphatidylinositol-calcium second messenger system. Isoform 2 may act as an inhibitor of GnRH-R signaling. The chain is Gonadotropin-releasing hormone receptor (GNRHR) from Homo sapiens (Human).